A 199-amino-acid polypeptide reads, in one-letter code: UPF0462 protein C4orf33 homolog (199 aa).

It belongs to the UPF0462 family.

In Rattus norvegicus (Rat), this protein is UPF0462 protein C4orf33 homolog.